Here is a 670-residue protein sequence, read N- to C-terminus: DNA mismatch repair protein MutL (670 aa).

The tract at residues S363–H451 is disordered. The span at E379 to A389 shows a compositional bias: basic and acidic residues.

Belongs to the DNA mismatch repair MutL/HexB family.

Functionally, this protein is involved in the repair of mismatches in DNA. It is required for dam-dependent methyl-directed DNA mismatch repair. May act as a 'molecular matchmaker', a protein that promotes the formation of a stable complex between two or more DNA-binding proteins in an ATP-dependent manner without itself being part of a final effector complex. This chain is DNA mismatch repair protein MutL, found in Syntrophobacter fumaroxidans (strain DSM 10017 / MPOB).